The following is a 493-amino-acid chain: Transcript termination protein A18 (493 aa).

The Helicase ATP-binding domain maps to 100–256 (MIELKRPLYI…NSIINIAKLS (157 aa)). 113-120 (LACGFGKT) contacts ATP. The DESH box motif lies at 206–209 (DESH).

Belongs to the helicase family. Poxviruses subfamily. As to quaternary structure, interacts with G2. Might be part of a transcription complex composed at least of G2, A18, and H5.

The protein resides in the virion. DNA helicase which seems to act as a postreplicative transcription termination factor. Involved in ATP-dependent release of nascent RNA. Forms a stable complex with single-stranded DNA, and to a lesser extent RNA. The polypeptide is Transcript termination protein A18 (Cowpox virus (strain GRI-90 / Grishak) (CPV)).